The sequence spans 707 residues: Serine/threonine protein kinase UL97 (707 aa).

Over residues 1–14 (MSSALRSRARSASL) the composition is skewed to low complexity. Disordered regions lie at residues 1 to 32 (MSSALRSRARSASLGTTTEGWDPPPLRRPSRA), 115 to 146 (EKEDAASDKENLRRPVVPSTSSRGSAASGDGY), 176 to 199 (FTGGSDPSDSVSGVRGGRKRPLRP), and 231 to 264 (ESQDSAVASGPGRVPQPLSGSSGEESATAVEADS). Residues 115-127 (EKEDAASDKENLR) show a composition bias toward basic and acidic residues. The segment covering 178–188 (GGSDPSDSVSG) has biased composition (low complexity). ATP-binding positions include 337-345 (LGQGSFGEV) and K359. The active-site Proton acceptor is the D456.

The protein belongs to the protein kinase superfamily. Tyr protein kinase family. HCMV ganciclovir subfamily. Interacts with UL83. Autophosphorylates on serine and threonine residues.

It is found in the virion. The enzyme catalyses L-seryl-[protein] + ATP = O-phospho-L-seryl-[protein] + ADP + H(+). It catalyses the reaction L-threonyl-[protein] + ATP = O-phospho-L-threonyl-[protein] + ADP + H(+). In terms of biological role, serine/threonine protein kinase that plays important roles in several processes including nuclear viral egress, viral replication or regulation of host cell cycle progression. Participates in the acquisition of tegument during virion morphogenesis in the nucleus. Redistributes the host nuclear lamina by phosphorylating cellular Lamins-A/C. Plays a role in viral DNA synthesis by phosphorylating the DNA polymerase processivity factor UL44. Stimulates host cell cycle to support viral DNA synthesis by phosphorylating host retinoblastoma/RB1 protein. Additional substrates have been identified including host EF1D or H2B. Also phosphorylates host SAMHD1 and thereby counteracts its antiviral effect by reducing its dNTP hydrolase activity. The chain is Serine/threonine protein kinase UL97 (UL97) from Human cytomegalovirus (strain Towne) (HHV-5).